Here is a 108-residue protein sequence, read N- to C-terminus: UPF0145 protein AF_0869 (108 aa).

It belongs to the UPF0145 family.

The sequence is that of UPF0145 protein AF_0869 from Archaeoglobus fulgidus (strain ATCC 49558 / DSM 4304 / JCM 9628 / NBRC 100126 / VC-16).